The sequence spans 691 residues: Elongation factor G (691 aa).

A tr-type G domain is found at Glu-8 to Val-282. GTP is bound by residues Ala-17–Thr-24, Asp-81–His-85, and Asn-135–Asp-138.

The protein belongs to the TRAFAC class translation factor GTPase superfamily. Classic translation factor GTPase family. EF-G/EF-2 subfamily.

The protein resides in the cytoplasm. In terms of biological role, catalyzes the GTP-dependent ribosomal translocation step during translation elongation. During this step, the ribosome changes from the pre-translocational (PRE) to the post-translocational (POST) state as the newly formed A-site-bound peptidyl-tRNA and P-site-bound deacylated tRNA move to the P and E sites, respectively. Catalyzes the coordinated movement of the two tRNA molecules, the mRNA and conformational changes in the ribosome. This is Elongation factor G from Prochlorococcus marinus (strain MIT 9303).